Reading from the N-terminus, the 318-residue chain is GTP 3',8-cyclase (318 aa).

A Radical SAM core domain is found at 4-218; the sequence is KHGRNIDYLR…MSRSDLIPIE (215 aa). A GTP-binding site is contributed by Arg-13. Residues Cys-20 and Cys-24 each contribute to the [4Fe-4S] cluster site. Tyr-26 contacts S-adenosyl-L-methionine. Position 27 (Cys-27) interacts with [4Fe-4S] cluster. Arg-62 provides a ligand contact to GTP. Gly-66 provides a ligand contact to S-adenosyl-L-methionine. Thr-93 is a GTP binding site. Ser-117 provides a ligand contact to S-adenosyl-L-methionine. Lys-154 is a binding site for GTP. Met-188 is an S-adenosyl-L-methionine binding site. [4Fe-4S] cluster-binding residues include Cys-248 and Cys-251. 253–255 provides a ligand contact to GTP; the sequence is KIR. Residue Cys-265 participates in [4Fe-4S] cluster binding.

It belongs to the radical SAM superfamily. MoaA family. As to quaternary structure, monomer and homodimer. The cofactor is [4Fe-4S] cluster.

The catalysed reaction is GTP + AH2 + S-adenosyl-L-methionine = (8S)-3',8-cyclo-7,8-dihydroguanosine 5'-triphosphate + 5'-deoxyadenosine + L-methionine + A + H(+). It participates in cofactor biosynthesis; molybdopterin biosynthesis. Functionally, catalyzes the cyclization of GTP to (8S)-3',8-cyclo-7,8-dihydroguanosine 5'-triphosphate. The polypeptide is GTP 3',8-cyclase (Clostridium acetobutylicum (strain ATCC 824 / DSM 792 / JCM 1419 / IAM 19013 / LMG 5710 / NBRC 13948 / NRRL B-527 / VKM B-1787 / 2291 / W)).